The chain runs to 532 residues: Muscarinic acetylcholine receptor M5 (532 aa).

Over 1–29 the chain is Extracellular; that stretch reads MEGDSYHNATTVNGTPVYHQPLERHRLWE. An N-linked (GlcNAc...) asparagine glycan is attached at N8. The helical transmembrane segment at 30–53 threads the bilayer; the sequence is VISIAAVTAVVSLITIVGNVLVMI. The Cytoplasmic portion of the chain corresponds to 54 to 66; that stretch reads SFKVNSQLKTVNN. A helical transmembrane segment spans residues 67-87; it reads YYLLSLACADLIIGIFSMNLY. Over 88-104 the chain is Extracellular; that stretch reads TTYILMGRWALGSLACD. Residues C103 and C183 are joined by a disulfide bond. A helical transmembrane segment spans residues 105–126; it reads LWLALDYVASNASVMNLLVISF. Residues 127-146 are Cytoplasmic-facing; sequence DRYFSITRPLTYRAKRTPKR. A helical membrane pass occupies residues 147–169; it reads AGVMIGLAWLISFILWAPAILCW. Over 170-191 the chain is Extracellular; it reads QYLVGKRTVPLDECQIQFLSEP. A helical membrane pass occupies residues 192–214; sequence TITFGTAIAAFYIPVSVMTILYC. Over 215-443 the chain is Cytoplasmic; that stretch reads RIYRETEKRT…LVKERKAAQT (229 aa). The interval 262–365 is disordered; that stretch reads AQRERNQTSW…SDTPNYFLSP (104 aa). Residues 269–281 show a composition bias toward low complexity; sequence TSWSSSRRSASTS. Residues 282 to 308 are compositionally biased toward polar residues; the sequence is GKPSQATDPSTNQAKAEQLTTCSSYPS. Residues 444–464 form a helical membrane-spanning segment; it reads LSAILLAFIITWTPYNIMVLV. At 465–478 the chain is on the extracellular side; that stretch reads STFCDKCVPVTLWH. The chain crosses the membrane as a helical span at residues 479 to 498; sequence LGYWLCYVNSTVNPICYALC. Topologically, residues 499-532 are cytoplasmic; it reads NRTFRKTFKMLLLCRWKKKKVEEKLYWQGNSKLP. A phosphothreonine mark is found at T501 and T505.

The protein belongs to the G-protein coupled receptor 1 family. Muscarinic acetylcholine receptor subfamily. CHRM5 sub-subfamily.

Its subcellular location is the cell membrane. The protein localises to the postsynaptic cell membrane. Its function is as follows. The muscarinic acetylcholine receptor mediates various cellular responses, including inhibition of adenylate cyclase, breakdown of phosphoinositides and modulation of potassium channels through the action of G proteins. Primary transducing effect is Pi turnover. The sequence is that of Muscarinic acetylcholine receptor M5 (CHRM5) from Macaca mulatta (Rhesus macaque).